The chain runs to 208 residues: Small ribosomal subunit protein uS4 (208 aa).

Residues 98-159 (LRLDNVVFRL…RSKKVVRITE (62 aa)) form the S4 RNA-binding domain.

The protein belongs to the universal ribosomal protein uS4 family. Part of the 30S ribosomal subunit. Contacts protein S5. The interaction surface between S4 and S5 is involved in control of translational fidelity.

In terms of biological role, one of the primary rRNA binding proteins, it binds directly to 16S rRNA where it nucleates assembly of the body of the 30S subunit. Functionally, with S5 and S12 plays an important role in translational accuracy. The sequence is that of Small ribosomal subunit protein uS4 from Anaeromyxobacter dehalogenans (strain 2CP-1 / ATCC BAA-258).